Here is a 1203-residue protein sequence, read N- to C-terminus: uncharacterized protein (1203 aa).

This is an uncharacterized protein from Magallana gigas (Pacific oyster).